A 273-amino-acid chain; its full sequence is NADPH-dependent 7-cyano-7-deazaguanine reductase (273 aa).

Substrate is bound at residue 80–82 (VES). 82–83 (SK) is a binding site for NADPH. Cys180 (thioimide intermediate) is an active-site residue. The active-site Proton donor is Asp187. 219–220 (HE) is a substrate binding site. NADPH is bound at residue 248–249 (RG).

The protein belongs to the GTP cyclohydrolase I family. QueF type 2 subfamily. As to quaternary structure, homodimer.

It localises to the cytoplasm. The enzyme catalyses 7-aminomethyl-7-carbaguanine + 2 NADP(+) = 7-cyano-7-deazaguanine + 2 NADPH + 3 H(+). It functions in the pathway tRNA modification; tRNA-queuosine biosynthesis. Functionally, catalyzes the NADPH-dependent reduction of 7-cyano-7-deazaguanine (preQ0) to 7-aminomethyl-7-deazaguanine (preQ1). In Bordetella parapertussis (strain 12822 / ATCC BAA-587 / NCTC 13253), this protein is NADPH-dependent 7-cyano-7-deazaguanine reductase.